We begin with the raw amino-acid sequence, 1509 residues long: DNA-directed RNA polymerase subunit beta' (1509 aa).

Residues Cys-75, Cys-77, Cys-90, and Cys-93 each contribute to the Zn(2+) site. Residues Asp-474, Asp-476, and Asp-478 each coordinate Mg(2+). Zn(2+) contacts are provided by Cys-804, Cys-878, Cys-885, and Cys-888.

This sequence belongs to the RNA polymerase beta' chain family. The RNAP catalytic core consists of 2 alpha, 1 beta, 1 beta' and 1 omega subunit. When a sigma factor is associated with the core the holoenzyme is formed, which can initiate transcription. The cofactor is Mg(2+). Requires Zn(2+) as cofactor.

It carries out the reaction RNA(n) + a ribonucleoside 5'-triphosphate = RNA(n+1) + diphosphate. DNA-dependent RNA polymerase catalyzes the transcription of DNA into RNA using the four ribonucleoside triphosphates as substrates. In Sulfurovum sp. (strain NBC37-1), this protein is DNA-directed RNA polymerase subunit beta'.